The chain runs to 317 residues: Phospho-N-acetylmuramoyl-pentapeptide-transferase (317 aa).

9 consecutive transmembrane segments (helical) span residues 3-23, 48-68, 72-92, 112-132, 141-161, 171-191, 193-213, 238-258, and 297-317; these read VIIY…PLFI, GTPT…MIIM, LNSN…IGLI, FLLQ…RFGS, ITWT…FVAV, LDGL…VVSF, WHQY…LGFL, AIAL…IYVI, and VVSV…LSLI.

It belongs to the glycosyltransferase 4 family. MraY subfamily. It depends on Mg(2+) as a cofactor.

It is found in the cell membrane. It carries out the reaction UDP-N-acetyl-alpha-D-muramoyl-L-alanyl-gamma-D-glutamyl-meso-2,6-diaminopimeloyl-D-alanyl-D-alanine + di-trans,octa-cis-undecaprenyl phosphate = di-trans,octa-cis-undecaprenyl diphospho-N-acetyl-alpha-D-muramoyl-L-alanyl-D-glutamyl-meso-2,6-diaminopimeloyl-D-alanyl-D-alanine + UMP. It functions in the pathway cell wall biogenesis; peptidoglycan biosynthesis. Functionally, catalyzes the initial step of the lipid cycle reactions in the biosynthesis of the cell wall peptidoglycan: transfers peptidoglycan precursor phospho-MurNAc-pentapeptide from UDP-MurNAc-pentapeptide onto the lipid carrier undecaprenyl phosphate, yielding undecaprenyl-pyrophosphoryl-MurNAc-pentapeptide, known as lipid I. This chain is Phospho-N-acetylmuramoyl-pentapeptide-transferase, found in Clostridium acetobutylicum (strain ATCC 824 / DSM 792 / JCM 1419 / IAM 19013 / LMG 5710 / NBRC 13948 / NRRL B-527 / VKM B-1787 / 2291 / W).